The primary structure comprises 89 residues: Large ribosomal subunit protein bL27 (89 aa).

The segment at 1-26 (MAHKKAGGSSRNGRDSAGQRRGVKRF) is disordered.

The protein belongs to the bacterial ribosomal protein bL27 family.

In Nitratidesulfovibrio vulgaris (strain DSM 19637 / Miyazaki F) (Desulfovibrio vulgaris), this protein is Large ribosomal subunit protein bL27.